Here is a 304-residue protein sequence, read N- to C-terminus: tRNA dimethylallyltransferase (304 aa).

Residue 10–17 participates in ATP binding; sequence GPTASGKT. Substrate is bound at residue 12–17; it reads TASGKT. 3 interaction with substrate tRNA regions span residues 35-38, 159-163, and 240-245; these read DSAL, QRLSR, and RCVGYR.

The protein belongs to the IPP transferase family. As to quaternary structure, monomer. Requires Mg(2+) as cofactor.

It catalyses the reaction adenosine(37) in tRNA + dimethylallyl diphosphate = N(6)-dimethylallyladenosine(37) in tRNA + diphosphate. Functionally, catalyzes the transfer of a dimethylallyl group onto the adenine at position 37 in tRNAs that read codons beginning with uridine, leading to the formation of N6-(dimethylallyl)adenosine (i(6)A). In Shewanella putrefaciens (strain CN-32 / ATCC BAA-453), this protein is tRNA dimethylallyltransferase.